The chain runs to 208 residues: MLAETLVAPGDKVLDAIGEYRMGKGLYEANRRIFASVAGFVNVYGFRDKSDNLVQVIEVRRSEDQLDNELLPFHGAIVTAKVMAVGLRFAKCDIISIGDKVYKKRFSALLPKKKLRPLEPELSEPFKNFVRPNDYILAKVCEDAEIKDKFVLSIAEDELGVVLCRGRFGEPMQKVDWNTVVSTRTGKTEPRKMAKVPQKCTLPTQSVA.

As to quaternary structure, component of the RNA exosome complex. Ubiquitously expressed.

It is found in the nucleus. Its subcellular location is the nucleolus. The protein resides in the nucleoplasm. In terms of biological role, non-catalytic component of the RNA exosome complex which has 3'-&gt;5' exoribonuclease activity and participates in a multitude of cellular RNA processing and degradation events. Involved in regulation of antisense ribosomal siRNA production. Involved in response to cold-warm shock. This chain is Exosome complex component CSL4 homolog, found in Caenorhabditis elegans.